The chain runs to 1837 residues: Nucleoporin nup211 (1837 aa).

Coiled coils occupy residues 59–378 (EVNY…YDEI), 415–519 (YKQK…ELDL), and 559–625 (VFRN…QLRY). Threonine 650 bears the Phosphothreonine mark. Coiled-coil stretches lie at residues 661–1163 (EQTS…NKLL), 1222–1637 (LDNR…ENTH), and 1675–1712 (KAKI…PEKT). The disordered stretch occupies residues 1464-1521 (KDSNHQLQESASSDAEQITKEQFEQLKSEKERTEKELADSKNELEHLQSEAVDADGKT). The span at 1468–1479 (HQLQESASSDAE) shows a compositional bias: polar residues. Over residues 1480–1521 (QITKEQFEQLKSEKERTEKELADSKNELEHLQSEAVDADGKT) the composition is skewed to basic and acidic residues. A Phosphoserine modification is found at serine 1558. Threonine 1560 is modified (phosphothreonine). A Phosphoserine modification is found at serine 1563. 2 disordered regions span residues 1602 to 1642 (EKEK…NIDD) and 1700 to 1837 (ENLN…KKAK). The span at 1617 to 1628 (KSQRIKELEEQA) shows a compositional bias: basic and acidic residues. Composition is skewed to polar residues over residues 1700–1730 (ENLN…SKPT), 1753–1763 (KSLSARLQGTG), 1795–1814 (IATS…TAKS), and 1827–1837 (GGSSSNQKKAK).

The protein resides in the cytoplasm. It localises to the nucleus. Its function is as follows. Functions as a component of the nuclear pore complex (NPC). NPC components, collectively referred to as nucleoporins (NUPs), can play the role of both NPC structural components and of docking or interaction partners for transiently associated nuclear transport factors. Active directional transport is assured by both, a Phe-Gly (FG) repeat affinity gradient for these transport factors across the NPC and a transport cofactor concentration gradient across the nuclear envelope. This chain is Nucleoporin nup211 (nup211), found in Schizosaccharomyces pombe (strain 972 / ATCC 24843) (Fission yeast).